Consider the following 376-residue polypeptide: Putative transmembrane protein 183BP (376 aa).

Disordered stretches follow at residues 1-20 and 102-127; these read MARG…AMPK and AQEE…ELDG. Residues 300–320 form a helical membrane-spanning segment; that stretch reads LNFIFIPIVMGMIFTLFTINV.

This sequence belongs to the TMEM183 family. As to expression, expressed in brain, lung, pancreas, thymus, intestine and blood. Not detected in heart, placenta, liver, muscle, kidney, spleen, prostate, testis, ovary and colon.

It is found in the membrane. This is Putative transmembrane protein 183BP from Homo sapiens (Human).